Here is a 174-residue protein sequence, read N- to C-terminus: Austinoid biosynthesis clusters protein H (174 aa).

This sequence belongs to the trt14 isomerase family. Homodimer.

Its pathway is secondary metabolite biosynthesis; terpenoid biosynthesis. Functionally, part of the gene cluster B that mediates the biosynthesis of austinol and dehydroaustinol, two fungal meroterpenoids. The first step of the pathway is the synthesis of 3,5-dimethylorsellinic acid by the polyketide synthase ausA. 3,5-dimethylorsellinic acid is then prenylated by the polyprenyl transferase ausN. Further epoxidation by the FAD-dependent monooxygenase ausM and cyclization by the probable terpene cyclase ausL lead to the formation of protoaustinoid A. Protoaustinoid A is then oxidized to spiro-lactone preaustinoid A3 by the combined action of the FAD-binding monooxygenases ausB and ausC, and the dioxygenase ausE. Acid-catalyzed keto-rearrangement and ring contraction of the tetraketide portion of preaustinoid A3 by ausJ lead to the formation of preaustinoid A4. The aldo-keto reductase ausK, with the help of ausH, is involved in the next step by transforming preaustinoid A4 into isoaustinone which is in turn hydroxylated by the P450 monooxygenase ausI to form austinolide. Finally, the cytochrome P450 monooxygenase ausG modifies austinolide to austinol. Austinol can be further modified to dehydroaustinol which forms a diffusible complex with diorcinol that initiates conidiation. Due to genetic rearrangements of the clusters and the subsequent loss of some enzymes, the end products of the Emericella nidulans austinoid biosynthesis clusters are austinol and dehydroaustinol, even if additional enzymes, such as the O-acetyltransferase ausQ and the cytochrome P450 monooxygenase ausR are still functional. The sequence is that of Austinoid biosynthesis clusters protein H from Emericella nidulans (strain FGSC A4 / ATCC 38163 / CBS 112.46 / NRRL 194 / M139) (Aspergillus nidulans).